A 1307-amino-acid polypeptide reads, in one-letter code: CRISPR-associated endonuclease Cas12a (1307 aa).

Positions 1-35 (MTQFEGFTNLYQVSKTLRFELIPQGKTLKHIQEQG) are WED-I (OBD-I). The interval 36-320 (FIEEDKARND…SDRNTLSFIL (285 aa)) is REC1 (helical-I). A crRNA-binding site is contributed by 47–51 (YKELK). Residues 74–106 (ENLSAAIDSYRKEKTEETRNALIEEQATYRNAI) adopt a coiled-coil conformation. CrRNA is bound by residues 175–176 (NR) and 307–310 (KQIL). A WED-II (helical-II) region spans residues 321–526 (EEFKSDEEVI…ARNYATKKPY (206 aa)). A WED-II (OBD-I) region spans residues 527–598 (SVEKFKLNFQ…GFDKMYYDYF (72 aa)). The segment at residues 599–607 (PDAAKMIPK) is a DNA-binding region (PAM-binding on target DNA). A PI (LHD) region spans residues 599–718 (PDAAKMIPKC…EYYAELNPLL (120 aa)). A WED-III (OBD-III) region spans residues 719 to 884 (YHISFQRIAE…ITLNYQAANS (166 aa)). Residue 752–761 (KGHHGKPNLH) participates in crRNA binding. Residues 780-783 (KLNG) constitute a DNA-binding region (target DNA). H800 acts as the For pre-crRNA processing in catalysis. Position 806-808 (806-808 (MLN)) interacts with crRNA. Active-site for pre-crRNA processing residues include K809 and K860. The interval 885-940 (PSKFNQRVNAYLKEHPETPIIGIDRGERNLIYITVIDSTGKILEQRSLNTIQQFDY) is ruvC-I. The active-site For DNase activity of RuvC domain is the D908. The bridge helix stretch occupies residues 941–957 (QKKLDNREKERVAARQA). Residues 951 to 968 (RVAARQAWSVVGTIKDLK) constitute a DNA-binding region (target DNA). A ruvC-II region spans residues 958–1066 (WSVVGTIKDL…TQSGFLFYVP (109 aa)). The active-site For DNase activity of RuvC domain is E993. The target DNA DNA-binding region spans 1051–1053 (SFA). A nuclease domain region spans residues 1067–1262 (APYTSKIDPL…FQNPEWPMDA (196 aa)). R1226 acts as the For DNase activity of nuclease domain in catalysis. The active-site For DNase activity of RuvC domain is D1263. The segment at 1263–1307 (DANGAYHIALKGQLLLNHLKESKDLKLQNGISNQDWLAYIQELRN) is ruvC-III.

This sequence belongs to the CRISPR-associated endonuclease Cas12a family. As to quaternary structure, monomer. It depends on Mg(2+) as a cofactor.

The enzyme catalyses Endonucleolytic cleavage to 5'-phosphodinucleotide and 5'-phosphooligonucleotide end-products.. The catalysed reaction is RNA = a 5'-hydroxy-ribonucleotide + n nucleoside-2',3'-cyclophosphates.. Its function is as follows. CRISPR (clustered regularly interspaced short palindromic repeat), is an adaptive immune system that provides protection against mobile genetic elements (viruses, transposable elements and conjugative plasmids). CRISPR clusters contain sequences complementary to antecedent mobile elements and target invading nucleic acids. CRISPR clusters are transcribed and processed into CRISPR RNA (crRNA). Recognizes a short motif in the CRISPR repeat sequences (the 5' PAM or protospacer adjacent motif, TTTN in this organism) to help distinguish self versus nonself, as targets within the bacterial CRISPR locus do not have PAMs. Has dsDNA endonuclease activity, results in staggered 4-base 5' overhangs 19 and 22 bases downstream of the PAM on the non-targeted and targeted strand respectively. Non-target strand cleavage by the RuvC domain is probably a prerequisite of target strand cleavage by the Nuc domain. Protects E.coli against plasmids and bacteriophage M13mp18, phage T4 with hydroxymethyl or unmodified (but not glycosylated) cytosines and to a lesser extent against lambda and VpaE1 phage. In this CRISPR system correct processing of pre-crRNA requires only this protein and the CRISPR locus. The sequence is that of CRISPR-associated endonuclease Cas12a from Acidaminococcus sp. (strain BV3L6).